Consider the following 209-residue polypeptide: Probable glutathione peroxidase 8-B (209 aa).

Residues 18–40 (VFLVFFSMVLCTGILCVLQLKFL) traverse the membrane as a helical segment. C79 is an active-site residue.

This sequence belongs to the glutathione peroxidase family.

It is found in the membrane. It carries out the reaction 2 glutathione + H2O2 = glutathione disulfide + 2 H2O. The protein is Probable glutathione peroxidase 8-B (gpx8-b) of Xenopus laevis (African clawed frog).